Here is a 270-residue protein sequence, read N- to C-terminus: 25S rRNA adenine-N(1) methyltransferase (270 aa).

Gly111 and Asp131 together coordinate S-adenosyl-L-methionine.

It belongs to the BMT2 family.

It is found in the nucleus. The protein resides in the nucleolus. S-adenosyl-L-methionine-dependent methyltransferase that specifically methylates the N(1) position of an adenine present in helix 65 in 25S rRNA. This Schizosaccharomyces pombe (strain 972 / ATCC 24843) (Fission yeast) protein is 25S rRNA adenine-N(1) methyltransferase.